The sequence spans 228 residues: Ribonuclease 3 (228 aa).

Positions 7–132 (LSAFMDRLGH…VIAAVYLDAG (126 aa)) constitute an RNase III domain. Glu45 provides a ligand contact to Mg(2+). Asp49 is a catalytic residue. Mg(2+) is bound by residues Asp118 and Glu121. Glu121 is a catalytic residue. Residues 157-226 (DPKTALQEWA…AKALLERLER (70 aa)) form the DRBM domain.

The protein belongs to the ribonuclease III family. Homodimer. The cofactor is Mg(2+).

The protein localises to the cytoplasm. The enzyme catalyses Endonucleolytic cleavage to 5'-phosphomonoester.. Functionally, digests double-stranded RNA. Involved in the processing of ribosomal RNA precursors and of some mRNAs. Complements an E.coli disruption mutant, but the E.coli enzyme does not cleave R.capsulatus rRNA precursor, showing substrate recognition is different. Probably also processes some mRNAs, and tRNAs when they are encoded in the rRNA operon. Probably processes pre-crRNA and tracrRNA of type II CRISPR loci if present in the organism. The polypeptide is Ribonuclease 3 (rnc) (Rhodobacter capsulatus (Rhodopseudomonas capsulata)).